The following is an 85-amino-acid chain: Large ribosomal subunit protein bL31B (85 aa).

The protein belongs to the bacterial ribosomal protein bL31 family. Type B subfamily. In terms of assembly, part of the 50S ribosomal subunit.

This chain is Large ribosomal subunit protein bL31B, found in Bifidobacterium longum subsp. infantis (strain ATCC 15697 / DSM 20088 / JCM 1222 / NCTC 11817 / S12).